The sequence spans 146 residues: Cyanate hydratase (146 aa).

Residues Arg87, Glu90, and Ser113 contribute to the active site.

The protein belongs to the cyanase family.

It carries out the reaction cyanate + hydrogencarbonate + 3 H(+) = NH4(+) + 2 CO2. Its function is as follows. Catalyzes the reaction of cyanate with bicarbonate to produce ammonia and carbon dioxide. This is Cyanate hydratase from Nostoc sp. (strain PCC 7120 / SAG 25.82 / UTEX 2576).